Here is a 211-residue protein sequence, read N- to C-terminus: Protein TMA23 (211 aa).

The interval 115 to 211 (ASFVVSSASS…SARRDRKEHI (97 aa)) is disordered. The span at 116-125 (SFVVSSASSS) shows a compositional bias: low complexity. Basic residues-rich tracts occupy residues 140 to 149 (VKRKKLKKDK), 158 to 176 (KKKK…KKSK), and 185 to 197 (SKHK…KKHK). Positions 198 to 211 (KEESSARRDRKEHI) are enriched in basic and acidic residues.

In terms of assembly, forms homooligomers. Associates with ribosomal complexes.

It is found in the nucleus. Its subcellular location is the nucleolus. Trans-acting factors of the ribosome biogenesis process. This chain is Protein TMA23 (TMA23), found in Saccharomyces cerevisiae (strain ATCC 204508 / S288c) (Baker's yeast).